A 338-amino-acid polypeptide reads, in one-letter code: Ketol-acid reductoisomerase (NADP(+)) (338 aa).

A KARI N-terminal Rossmann domain is found at Met-1–Thr-181. Residues Tyr-24 to Gln-27, Arg-47, Ser-50, Thr-52, and Asp-82 to Gln-85 each bind NADP(+). Residue His-107 is part of the active site. Gly-133 is a binding site for NADP(+). Residues Thr-182–Ile-327 enclose the KARI C-terminal knotted domain. The Mg(2+) site is built by Asp-190, Glu-194, Glu-226, and Glu-230. Ser-251 lines the substrate pocket.

This sequence belongs to the ketol-acid reductoisomerase family. Mg(2+) is required as a cofactor.

It catalyses the reaction (2R)-2,3-dihydroxy-3-methylbutanoate + NADP(+) = (2S)-2-acetolactate + NADPH + H(+). It carries out the reaction (2R,3R)-2,3-dihydroxy-3-methylpentanoate + NADP(+) = (S)-2-ethyl-2-hydroxy-3-oxobutanoate + NADPH + H(+). The protein operates within amino-acid biosynthesis; L-isoleucine biosynthesis; L-isoleucine from 2-oxobutanoate: step 2/4. It participates in amino-acid biosynthesis; L-valine biosynthesis; L-valine from pyruvate: step 2/4. Involved in the biosynthesis of branched-chain amino acids (BCAA). Catalyzes an alkyl-migration followed by a ketol-acid reduction of (S)-2-acetolactate (S2AL) to yield (R)-2,3-dihydroxy-isovalerate. In the isomerase reaction, S2AL is rearranged via a Mg-dependent methyl migration to produce 3-hydroxy-3-methyl-2-ketobutyrate (HMKB). In the reductase reaction, this 2-ketoacid undergoes a metal-dependent reduction by NADPH to yield (R)-2,3-dihydroxy-isovalerate. The polypeptide is Ketol-acid reductoisomerase (NADP(+)) (Cellvibrio japonicus (strain Ueda107) (Pseudomonas fluorescens subsp. cellulosa)).